We begin with the raw amino-acid sequence, 24 residues long: Coenzyme PQQ synthesis protein A (24 aa).

The pyrroloquinoline quinone (Glu-Tyr) cross-link spans 16-20; it reads EITMY.

It belongs to the PqqA family.

It functions in the pathway cofactor biosynthesis; pyrroloquinoline quinone biosynthesis. Its function is as follows. Required for coenzyme pyrroloquinoline quinone (PQQ) biosynthesis. PQQ is probably formed by cross-linking a specific glutamate to a specific tyrosine residue and excising these residues from the peptide. This chain is Coenzyme PQQ synthesis protein A, found in Cupriavidus taiwanensis (strain DSM 17343 / BCRC 17206 / CCUG 44338 / CIP 107171 / LMG 19424 / R1) (Ralstonia taiwanensis (strain LMG 19424)).